Reading from the N-terminus, the 545-residue chain is Chaperonin GroEL (545 aa).

ATP-binding positions include 30–33 (TLGP), Lys-51, 87–91 (DGTTT), Gly-415, and Asp-495.

Belongs to the chaperonin (HSP60) family. In terms of assembly, forms a cylinder of 14 subunits composed of two heptameric rings stacked back-to-back. Interacts with the co-chaperonin GroES.

The protein localises to the cytoplasm. It catalyses the reaction ATP + H2O + a folded polypeptide = ADP + phosphate + an unfolded polypeptide.. Together with its co-chaperonin GroES, plays an essential role in assisting protein folding. The GroEL-GroES system forms a nano-cage that allows encapsulation of the non-native substrate proteins and provides a physical environment optimized to promote and accelerate protein folding. In Shewanella amazonensis (strain ATCC BAA-1098 / SB2B), this protein is Chaperonin GroEL.